A 354-amino-acid chain; its full sequence is AT-rich binding protein (354 aa).

The C2H2-type 1 zinc-finger motif lies at 31–54 (IVCHTCQEELQTQDKFWKHIQDEH). 2 disordered regions span residues 84–124 (LPLY…HDDQ) and 256–276 (EVQQHKESTNNSTTASASSAM). Composition is skewed to basic and acidic residues over residues 89 to 100 (KVSENDQQRDDV) and 109 to 124 (QKEPKDYTEMRAHDDQ). Residues 264–276 (TNNSTTASASSAM) show a composition bias toward low complexity. 2 C2H2-type zinc fingers span residues 285–309 (YICDFENCGLKFKYHSRLELHRSVH) and 315–338 (FACEICGASFKQSCNLSTHRKKKH).

In terms of assembly, homooctamer. As to expression, fat body.

The protein resides in the nucleus. In terms of biological role, may be a transcription factor for genes having (A+T) stretches in their promoter and/or enhancer regions. Binds to AT rich DNA. This chain is AT-rich binding protein, found in Sarcophaga peregrina (Flesh fly).